A 354-amino-acid polypeptide reads, in one-letter code: Kelch domain-containing protein 8B (354 aa).

Kelch repeat units follow at residues 1–31, 32–79, 81–127, 128–175, 176–222, 224–281, 282–329, and 331–354; these read MAAG…HQDG, HLLV…VLGK, VLVV…ERDG, MVYA…LHGN, KIYV…MAEG, VFSL…SLGG, NIVA…QAGP, and LFVI…RDGV.

The protein localises to the cytoplasm. It is found in the midbody. Functionally, involved in pinching off the separated nuclei at the cleavage furrow and in cytokinesis. Required for mitotic integrity and maintenance of chromosomal stability. Protects cells against mitotic errors, centrosomal amplification, micronucleus formation and aneuploidy. Plays a key role of midbody function involving abscission of the daughter cells during cytokinesis and appropriate chromosomal and nuclear segregation into the daughter cells. This Rattus norvegicus (Rat) protein is Kelch domain-containing protein 8B (Klhdc8b).